The primary structure comprises 325 residues: MIARIWSGESSLWRLLLPLSWLYGLVSGAIRLSYKLGLKRAWRAPVPVVVVGNLTAGGNGKTPVVIWLVEKLQQRGVRVGVVSRGYGGKAAAYPLLLTPETTTAEAGDEPVLIYQRTGAPVAVAPERAAAVKAILAAHNVQIIITDDGLQHYRLARDIEIVVIDGVRRFGNGWWLPAGPMRERASRLKTVDAAIVNGGVARAGEIPMQLAPGLAVNLRTGARCDVAQLSNIVAMAGIGHPPRFFATLEACGAHPQKCVPLADHQTLAPADVQALVGEGQTLVMTEKDAVKCRAFAEDNWWFLPVDARLSGEQPDKLLEHITSLVR.

55–62 (TAGGNGKT) is a binding site for ATP.

Belongs to the LpxK family.

It catalyses the reaction a lipid A disaccharide + ATP = a lipid IVA + ADP + H(+). It functions in the pathway glycolipid biosynthesis; lipid IV(A) biosynthesis; lipid IV(A) from (3R)-3-hydroxytetradecanoyl-[acyl-carrier-protein] and UDP-N-acetyl-alpha-D-glucosamine: step 6/6. In terms of biological role, transfers the gamma-phosphate of ATP to the 4'-position of a tetraacyldisaccharide 1-phosphate intermediate (termed DS-1-P) to form tetraacyldisaccharide 1,4'-bis-phosphate (lipid IVA). The protein is Tetraacyldisaccharide 4'-kinase of Salmonella paratyphi A (strain ATCC 9150 / SARB42).